Consider the following 400-residue polypeptide: Enoyl-[acyl-carrier-protein] reductase [NADH] 1 (400 aa).

NAD(+) contacts are provided by residues glycine 48–tyrosine 53, phenylalanine 74–glutamate 75, aspartate 111–alanine 112, and leucine 139–alanine 140. Residue tyrosine 225 coordinates substrate. Tyrosine 235 serves as the catalytic Proton donor. Residues lysine 244 and valine 273–threonine 275 each bind NAD(+).

Belongs to the TER reductase family. Monomer.

The catalysed reaction is a 2,3-saturated acyl-[ACP] + NAD(+) = a (2E)-enoyl-[ACP] + NADH + H(+). It participates in lipid metabolism; fatty acid biosynthesis. In terms of biological role, involved in the final reduction of the elongation cycle of fatty acid synthesis (FAS II). Catalyzes the reduction of a carbon-carbon double bond in an enoyl moiety that is covalently linked to an acyl carrier protein (ACP). The polypeptide is Enoyl-[acyl-carrier-protein] reductase [NADH] 1 (Vibrio vulnificus (strain CMCP6)).